A 322-amino-acid chain; its full sequence is Putative UDP-N-acetylglucosamine--dolichyl-phosphate N-acetylglucosaminephosphotransferase (322 aa).

A run of 9 helical transmembrane segments spans residues 5–25 (AILL…VWVI), 46–66 (IPLL…FSLL), 76–96 (IPAV…DDIF), 102–122 (VRAF…VGHS), 123–143 (IISI…IIII), 160–180 (LNGL…YIGL), 186–206 (TYQA…FLIF), 222–242 (FIGA…ALAI), and 295–315 (YQVV…AVIL).

The protein belongs to the glycosyltransferase 4 family.

It is found in the cell membrane. The enzyme catalyses a di-trans,poly-cis-dolichyl phosphate + UDP-N-acetyl-alpha-D-glucosamine = an N-acetyl-alpha-D-glucosaminyl-diphospho-di-trans,poly-cis-dolichol + UMP. Inhibited by tunicamycin. The sequence is that of Putative UDP-N-acetylglucosamine--dolichyl-phosphate N-acetylglucosaminephosphotransferase (gnpTA) from Saccharolobus solfataricus (strain ATCC 35092 / DSM 1617 / JCM 11322 / P2) (Sulfolobus solfataricus).